The sequence spans 353 residues: Probable G-protein coupled receptor 139 (353 aa).

Residues 1–29 (MEHTHAHLAANSSLSWWSPGSACGLGFVP) are Extracellular-facing. An N-linked (GlcNAc...) asparagine glycan is attached at asparagine 11. Residues 30–50 (VVYYSLLLCLGLPANILTVII) traverse the membrane as a helical segment. At 51 to 65 (LSQLVARRQKSSYNY) the chain is on the cytoplasmic side. A helical membrane pass occupies residues 66-86 (LLALAAADILVLFFIVFVDFL). Topologically, residues 87 to 102 (LEDFILNMQMPQVPDK) are extracellular. A helical membrane pass occupies residues 103-123 (IIEVLEFSSIHTSIWITVPLT). Over 124–148 (IDRYIAVCHPLKYHTVSYPARTRKV) the chain is Cytoplasmic. Residues 149-169 (IVSVYITCFLTSIPYYWWPNI) traverse the membrane as a helical segment. Over 170–181 (WTEDYISTSVHH) the chain is Extracellular. The chain crosses the membrane as a helical span at residues 182–202 (VLIWIHCFTVYLVPCSIFFIL). Residues 203–228 (NSIIVYKLRRKSNFRLRGYSTGKTTA) are Cytoplasmic-facing. A helical membrane pass occupies residues 229–249 (ILFTITSIFATLWAPRIIMIL). At 250-268 (YHLYGAPIQNRWLVHIMSD) the chain is on the extracellular side. A helical transmembrane segment spans residues 269-289 (IANMLALLNTAINFFLYCFIS). Over 290–353 (KRFRTMAAAT…KNGKPIKVSP (64 aa)) the chain is Cytoplasmic.

The protein belongs to the G-protein coupled receptor 1 family. In terms of tissue distribution, expressed almost exclusively in the brain. Detected at very low levels in the peripheral tissues.

It is found in the cell membrane. Its function is as follows. Orphan receptor. Seems to act through a G(q/11)-mediated pathway. The sequence is that of Probable G-protein coupled receptor 139 (GPR139) from Homo sapiens (Human).